The following is a 282-amino-acid chain: Plant cysteine oxidase 3 (282 aa).

Fe cation is bound by residues H131, H133, and H202.

The protein belongs to the cysteine dioxygenase family. The cofactor is Fe(2+).

The protein localises to the nucleus. It is found in the cytoplasm. It catalyses the reaction L-cysteine + O2 = 3-sulfino-L-alanine + H(+). Functionally, catalyzes the oxidation of N-terminal cysteine residues (N-Cys), thus preparing the protein for N-end rule pathway-mediated proteasomal degradation, upstream of the N-end rule enzymes ATE1, ATE2 and PRT6. Controls the preparation of the group VII ethylene response factor (ERF-VII) proteins for degradation via the 26S proteasome N-end rule pathway. Acts as an oxygen sensor that controls the stability of ERF-VII proteins, which are stabilized in flooding-induced hypoxia, and regulate transcriptional adaptation to these adverse conditions. The sequence is that of Plant cysteine oxidase 3 from Arabidopsis thaliana (Mouse-ear cress).